Reading from the N-terminus, the 550-residue chain is Arginine--tRNA ligase (550 aa).

A 'HIGH' region motif is present at residues 130-140 (ANPTGPIHLGG).

Belongs to the class-I aminoacyl-tRNA synthetase family. In terms of assembly, monomer.

It localises to the cytoplasm. It catalyses the reaction tRNA(Arg) + L-arginine + ATP = L-arginyl-tRNA(Arg) + AMP + diphosphate. This Corynebacterium glutamicum (strain R) protein is Arginine--tRNA ligase.